Here is a 220-residue protein sequence, read N- to C-terminus: Translin-1 (220 aa).

This sequence belongs to the translin family. In terms of assembly, forms an octameric ring-shaped structure, which is capable of binding DNA or RNA.

It is found in the cytoplasm. It localises to the nucleus. DNA-binding protein that specifically recognizes consensus sequences at the breakpoint junctions in chromosomal translocations. Selectively binds single-stranded d(GT)n and d(GTT)n microsatellite repeats. Has much higher affinities for the homologous RNA sequences (GU)n and (GUU)n. Does not bind double-stranded DNA. Has a role in meiosis. This is Translin-1 (tsn1) from Schizosaccharomyces pombe (strain 972 / ATCC 24843) (Fission yeast).